Here is a 215-residue protein sequence, read N- to C-terminus: Outer membrane protein assembly factor BamC homolog (215 aa).

The signal sequence occupies residues 1 to 16; sequence MKKIILNLVTAIILAG. A lipid anchor (N-palmitoyl cysteine) is attached at C17. C17 is lipidated: S-diacylglycerol cysteine.

The protein belongs to the BamC family.

The protein resides in the cell outer membrane. In Haemophilus influenzae (strain ATCC 51907 / DSM 11121 / KW20 / Rd), this protein is Outer membrane protein assembly factor BamC homolog.